The sequence spans 409 residues: MLRLITQSGDIVQELRRLHHRPVPSPWPVMAQVVAAMEHWAAMDQDAPPRVSGAELDAAYQRISQEKLSVIRQACAALEQVYRPQLPKTQVSFPEDGTVRGQRFYPVRRAGFYLEAKRGDALGNLLRQGMLAKTVGVAERVLVTETISSTILVAAQEMGIEEIYLAAGVPAIAMLTWGAKNIAPVESITGAGCPRVMAAKQLVSGVVTIDQTLARTNLMVLADGEANGQWLALDLLAHAEQYPNASAVLLTDRLELGEEVIQSVNRYCREQEHSVHTEKALAHYGLVAIVEDLEACGSWINEFCPHILLLAMEDPWTMVEKVQRAREIYIGHRSPSILGHYLSGANRLQTQDGAMATASELAFHCFLRSSQLLDYGNNPPPPWLKDLVNWQGLTAIEERLGQLGRLKES.

The protein belongs to the histidinol dehydrogenase family.

This is Histidinol dehydrogenase homolog from Synechocystis sp. (strain ATCC 27184 / PCC 6803 / Kazusa).